Consider the following 306-residue polypeptide: MNFDQKAVKFLANFYINGGKHWTRGPLSQKPLHPTQPSAAAVLWWDQELETAWDEMWHPKMKRSSSGFRLRIGAPNESTPISTGTLRELWLERRPPILMDLDVPGPAQYEVPNMSLREASPHPQYTIGRKYPVREGGGRRAWQTMWLQSESPFMQKTDFNRETKWPSPAEYTPLSQPAFPAFSFGDRHRSVVKMPESRFRPGMLRARGPCSYTPLLPTSKPSGEKRPSPNTYNILPGYRLQSTRSPAFSMSRSPAFASWVSSSGTPGPAAYYVEDCYNSRFPSSPGVVIQGVRRPKRHDTGPFCTL.

Positions 210 to 230 are disordered; sequence CSYTPLLPTSKPSGEKRPSPN.

In Mus musculus (Mouse), this protein is Protein STPG3.